The following is a 282-amino-acid chain: Undecaprenyl-diphosphatase (282 aa).

7 helical membrane passes run 45–65 (AFME…VVFI), 86–106 (WQLW…GIPL), 114–134 (FHNF…FILI), 151–171 (LPYK…FPGT), 196–216 (FFLG…KFIL), 224–244 (GQLT…MYVI), and 256–276 (FTVF…YWVF).

The protein belongs to the UppP family.

The protein localises to the cell membrane. It catalyses the reaction di-trans,octa-cis-undecaprenyl diphosphate + H2O = di-trans,octa-cis-undecaprenyl phosphate + phosphate + H(+). Catalyzes the dephosphorylation of undecaprenyl diphosphate (UPP). Confers resistance to bacitracin. The chain is Undecaprenyl-diphosphatase from Streptococcus gordonii (strain Challis / ATCC 35105 / BCRC 15272 / CH1 / DL1 / V288).